Consider the following 68-residue polypeptide: Small integral membrane protein 10-like protein 3 (68 aa).

This is Small integral membrane protein 10-like protein 3 from Homo sapiens (Human).